A 397-amino-acid polypeptide reads, in one-letter code: Homoserine O-acetyltransferase (397 aa).

Positions 58 to 368 constitute an AB hydrolase-1 domain; that stretch reads NAVLVLHALT…EAKWGHDAFL (311 aa). Ser-164 acts as the Nucleophile in catalysis. Arg-233 is a substrate binding site. Catalysis depends on residues Asp-331 and His-364. Asp-365 contributes to the substrate binding site.

This sequence belongs to the AB hydrolase superfamily. MetX family. As to quaternary structure, homodimer.

The protein resides in the cytoplasm. It catalyses the reaction L-homoserine + acetyl-CoA = O-acetyl-L-homoserine + CoA. The protein operates within amino-acid biosynthesis; L-methionine biosynthesis via de novo pathway; O-acetyl-L-homoserine from L-homoserine: step 1/1. Its function is as follows. Transfers an acetyl group from acetyl-CoA to L-homoserine, forming acetyl-L-homoserine. This chain is Homoserine O-acetyltransferase, found in Solidesulfovibrio magneticus (strain ATCC 700980 / DSM 13731 / RS-1) (Desulfovibrio magneticus).